The following is a 129-amino-acid chain: Small ribosomal subunit protein uS11 (129 aa).

The protein belongs to the universal ribosomal protein uS11 family. Part of the 30S ribosomal subunit. Interacts with proteins S7 and S18. Binds to IF-3.

Its function is as follows. Located on the platform of the 30S subunit, it bridges several disparate RNA helices of the 16S rRNA. Forms part of the Shine-Dalgarno cleft in the 70S ribosome. The polypeptide is Small ribosomal subunit protein uS11 (Azotobacter vinelandii (strain DJ / ATCC BAA-1303)).